The following is a 270-amino-acid chain: Orotidine 5'-phosphate decarboxylase (270 aa).

The Proton donor role is filled by K89.

It belongs to the OMP decarboxylase family. Type 2 subfamily.

It catalyses the reaction orotidine 5'-phosphate + H(+) = UMP + CO2. It functions in the pathway pyrimidine metabolism; UMP biosynthesis via de novo pathway; UMP from orotate: step 2/2. The polypeptide is Orotidine 5'-phosphate decarboxylase (Dehalococcoides mccartyi (strain CBDB1)).